Here is a 215-residue protein sequence, read N- to C-terminus: UPF0502 protein PSEEN2299 (215 aa).

It belongs to the UPF0502 family.

The sequence is that of UPF0502 protein PSEEN2299 from Pseudomonas entomophila (strain L48).